The sequence spans 400 residues: Enoyl-[acyl-carrier-protein] reductase [NADH] (400 aa).

Residues 48–53, 74–75, 111–112, and 139–140 each bind NAD(+); these read GASTGY, FE, DA, and LA. Tyrosine 225 lines the substrate pocket. Catalysis depends on tyrosine 235, which acts as the Proton donor. Residues lysine 244 and 273 to 275 contribute to the NAD(+) site; that span reads VVT.

Belongs to the TER reductase family. Monomer.

The enzyme catalyses a 2,3-saturated acyl-[ACP] + NAD(+) = a (2E)-enoyl-[ACP] + NADH + H(+). Its pathway is lipid metabolism; fatty acid biosynthesis. Its function is as follows. Involved in the final reduction of the elongation cycle of fatty acid synthesis (FAS II). Catalyzes the reduction of a carbon-carbon double bond in an enoyl moiety that is covalently linked to an acyl carrier protein (ACP). The chain is Enoyl-[acyl-carrier-protein] reductase [NADH] from Burkholderia multivorans (strain ATCC 17616 / 249).